A 154-amino-acid polypeptide reads, in one-letter code: Putative pre-16S rRNA nuclease (154 aa).

It belongs to the YqgF nuclease family.

Its subcellular location is the cytoplasm. In terms of biological role, could be a nuclease involved in processing of the 5'-end of pre-16S rRNA. The chain is Putative pre-16S rRNA nuclease from Rickettsia conorii (strain ATCC VR-613 / Malish 7).